The chain runs to 486 residues: Sensor protein PhoQ (486 aa).

The Cytoplasmic segment spans residues 1–16 (MKKLLRLFFPLSLRVR). The helical transmembrane segment at 17 to 37 (FLLATAAVVLVLSLAYGMVAL) threads the bilayer. Over 38–194 (IGYSVSFDKT…LKSSYMVWSW (157 aa)) the chain is Periplasmic. The a divalent metal cation site is built by aspartate 151 and aspartate 152. Residues 195–215 (FIYVLSANLLLVIPLLWVAAW) traverse the membrane as a helical segment. Residues 215 to 266 (WWSLRPIEALAKEVRELEEHNRELLNPATTRELTSLVRNLNRLLKSERERYD) enclose the HAMP domain. At 216 to 486 (WSLRPIEALA…GRQHSAPKDE (271 aa)) the chain is on the cytoplasmic side. Residues 274–480 (DLTHSLKTPL…RMEVIFGRQH (207 aa)) form the Histidine kinase domain. Histidine 277 is subject to Phosphohistidine; by autocatalysis. Mg(2+) is bound at residue asparagine 385. ATP contacts are provided by residues 385–393 (NVLDNACKY), 415–420 (DDGPGI), and 434–446 (RVDTLRPGQGVGL). Glutamine 442 is a binding site for Mg(2+).

As to quaternary structure, homodimer; probably dimerizes via the cytoplasmic domain. Probably interacts with MgrB in the periplasm, altering its activity and that of downstream effector PhoP.

It localises to the cell inner membrane. It catalyses the reaction ATP + protein L-histidine = ADP + protein N-phospho-L-histidine.. Its activity is regulated as follows. Acetyl-CoA acts as a non-competitive inhibitor of the PhoQ autokinase activity. Feedback inhibited by MgrB, which seems to bind PhoQ, altering its activity and that of downstream effector PhoP. In terms of biological role, member of the two-component regulatory system PhoP/PhoQ involved in adaptation to low Mg(2+) environments and the control of acid resistance genes. In low periplasmic Mg(2+), PhoQ functions as a membrane-associated protein kinase that undergoes autophosphorylation and subsequently transfers the phosphate to PhoP, resulting in the expression of PhoP-activated genes (PAG) and repression of PhoP-repressed genes (PRG). In high periplasmic Mg(2+), acts as a protein phosphatase that dephosphorylates phospho-PhoP, resulting in the repression of PAG and may lead to expression of some PRG. PhoP-regulated transcription is redox-sensitive, being activated when the periplasm becomes more reducing (deletion of dsbA/dsbB, or treatment with dithiothreitol). MgrB acts between DsbA/DsbB and PhoP/PhoQ in this pathway; the 2 periplasmic Cys residues of MgrB are required for its action on PhoQ, which then acts on PhoP. Mediates magnesium influx to the cytosol by activation of mgtA. Promotes expression of the two-component regulatory system rstA/rstB and transcription of the hemL, mgrB, nagA, slyB, vboR and yrbL genes. This is Sensor protein PhoQ (phoQ) from Escherichia coli (strain K12).